The following is an 886-amino-acid chain: Alanine--tRNA ligase (886 aa).

Residues His-564, His-568, Cys-676, and His-680 each coordinate Zn(2+).

Belongs to the class-II aminoacyl-tRNA synthetase family. Zn(2+) is required as a cofactor.

Its subcellular location is the cytoplasm. The catalysed reaction is tRNA(Ala) + L-alanine + ATP = L-alanyl-tRNA(Ala) + AMP + diphosphate. Catalyzes the attachment of alanine to tRNA(Ala) in a two-step reaction: alanine is first activated by ATP to form Ala-AMP and then transferred to the acceptor end of tRNA(Ala). Also edits incorrectly charged Ser-tRNA(Ala) and Gly-tRNA(Ala) via its editing domain. In Bartonella bacilliformis (strain ATCC 35685 / KC583 / Herrer 020/F12,63), this protein is Alanine--tRNA ligase.